Here is a 760-residue protein sequence, read N- to C-terminus: MNMSLPADRDTAKKPSAQKPSAHAQNATAAVDVTALGLTESEYTQICSLLKRSPTKSELAIYSVLWSEHCSYKSSRRHLRQLADLTEVTKKHLLVGIGQNAGVVDIGGGWAAAFKIESHNHPSFIEPFQGAATGIGGIVRDIIAMGAKPVALMDSLRFGAASDPDTQRVADGVVSGISFYGNCLGVPNIGGETAFDPVYQGNPLVNVLCVGVMRRENIRLANASGPGNLVVLFGAPTGRDGIGGASVLASDSFTSDAKANRPAVQIGDPFVEKLLTECCLELYAADLVVAIQDLGAAGISCAASELAHNGRVGIRLDLSAVPLRDTTLAPDEILVSESQERMMAIVHPDNLEAFFEITNRWGISGAVIGEVDNSQYLTVVHEGKTLVRLNPKTLTGPSYNRPVKKPAYLIRRSAANRLPVTNDPHLLREDILQVISCPNLSDKSVITNQYDRYVQGNTALCHPDDAGVIRMYKNTGVALSCDGNSRYSYLDPHAGAQLAVAEAYRNVSVVGATPLAVTNCLNFGNPENPEVMWQFRETCRGLSDACKRLEIPITGGNVSFYNQTDGKDIFPTPVVGILGIVDNLTQTLTSGWNAPDLFIYLLGVTRPEFGGSVWADTMYGHIGGVPPKLDLARESRLSNLLVAGAKKRVFESAHDLSEGGLIQAIVESCLRHGFGADIALDTIRATSLTEALFSESASRVLVSCRSQEDLRDLCRRNSYEYTLIGTTRHTGELTISEIGKFTLNELSDARQKVTRVLFRG.

A disordered region spans residues 1 to 25 (MNMSLPADRDTAKKPSAQKPSAHAQ). His-69 is a catalytic residue. ATP contacts are provided by Tyr-72 and Lys-115. Glu-117 is a binding site for Mg(2+). Substrate is bound by residues 118-121 (SHNH) and Arg-140. The Proton acceptor role is filled by His-119. Asp-141 is a Mg(2+) binding site. Substrate is bound at residue Gln-265. Residue Asp-293 participates in Mg(2+) binding. Substrate is bound at residue 337–339 (ESQ). Asn-519 and Gly-556 together coordinate ATP. Asn-557 contributes to the Mg(2+) binding site. Position 559 (Ser-559) interacts with substrate.

The protein belongs to the FGAMS family. Monomer. Part of the FGAM synthase complex composed of 1 PurL, 1 PurQ and 2 PurS subunits.

It is found in the cytoplasm. It catalyses the reaction N(2)-formyl-N(1)-(5-phospho-beta-D-ribosyl)glycinamide + L-glutamine + ATP + H2O = 2-formamido-N(1)-(5-O-phospho-beta-D-ribosyl)acetamidine + L-glutamate + ADP + phosphate + H(+). Its pathway is purine metabolism; IMP biosynthesis via de novo pathway; 5-amino-1-(5-phospho-D-ribosyl)imidazole from N(2)-formyl-N(1)-(5-phospho-D-ribosyl)glycinamide: step 1/2. Its function is as follows. Part of the phosphoribosylformylglycinamidine synthase complex involved in the purines biosynthetic pathway. Catalyzes the ATP-dependent conversion of formylglycinamide ribonucleotide (FGAR) and glutamine to yield formylglycinamidine ribonucleotide (FGAM) and glutamate. The FGAM synthase complex is composed of three subunits. PurQ produces an ammonia molecule by converting glutamine to glutamate. PurL transfers the ammonia molecule to FGAR to form FGAM in an ATP-dependent manner. PurS interacts with PurQ and PurL and is thought to assist in the transfer of the ammonia molecule from PurQ to PurL. The sequence is that of Phosphoribosylformylglycinamidine synthase subunit PurL from Tropheryma whipplei (strain TW08/27) (Whipple's bacillus).